The sequence spans 270 residues: Tetraspanin-17 (270 aa).

Topologically, residues 1-19 (MPGKHQQFQDPEVGCCGKY) are cytoplasmic. A helical membrane pass occupies residues 20 to 40 (FLFGFNIVFWVLGALFLAIGL). Residues 41 to 63 (WAWGEKGVLSNISALTDLGGLDP) lie on the Extracellular side of the membrane. An N-linked (GlcNAc...) asparagine glycan is attached at asparagine 51. Residues 64–84 (VWLFVVVGGVMSVLGFAGCIG) traverse the membrane as a helical segment. Over 85 to 94 (ALRENTFLLK) the chain is Cytoplasmic. Residues 95–115 (FFSVFLGLIFFLELAAGILAF) traverse the membrane as a helical segment. Over 116–234 (VFKDWIRDQL…GQFEKWLQDN (119 aa)) the chain is Extracellular. Cystine bridges form between cysteine 155/cysteine 223, cysteine 156/cysteine 188, cysteine 172/cysteine 182, and cysteine 189/cysteine 202. Asparagine 171 carries N-linked (GlcNAc...) asparagine glycosylation. The helical transmembrane segment at 235 to 255 (LIVVAGVLVGIALLQIFGLCL) threads the bilayer. At 256–270 (AQNLVSDIKAVKANW) the chain is on the cytoplasmic side.

This sequence belongs to the tetraspanin (TM4SF) family. Interacts with ADAM10; the interaction influences ADAM10 substrate specificity, endocytosis and turnover.

The protein localises to the cell membrane. Its function is as follows. Part of TspanC8 subgroup, composed of 6 members that interact with the transmembrane metalloprotease ADAM10. This interaction is required for ADAM10 exit from the endoplasmic reticulum and for enzymatic maturation and trafficking to the cell surface as well as substrate specificity. Different TspanC8/ADAM10 complexes have distinct substrates. Seems to regulate VE-cadherin expression in endothelial cells probably through interaction with ADAM10, promoting leukocyte transmigration. This Mus musculus (Mouse) protein is Tetraspanin-17 (Tspan17).